Reading from the N-terminus, the 151-residue chain is Cell division control protein 2 homolog 2 (151 aa).

The Protein kinase domain maps to 1-151; the sequence is ALKEIRMDNE…IMQTLQIESL (151 aa). Position 3 (lysine 3) interacts with ATP. Aspartate 113 (proton acceptor) is an active-site residue.

The protein belongs to the protein kinase superfamily. CMGC Ser/Thr protein kinase family. CDC2/CDKX subfamily.

It carries out the reaction L-seryl-[protein] + ATP = O-phospho-L-seryl-[protein] + ADP + H(+). The catalysed reaction is L-threonyl-[protein] + ATP = O-phospho-L-threonyl-[protein] + ADP + H(+). It catalyses the reaction [DNA-directed RNA polymerase] + ATP = phospho-[DNA-directed RNA polymerase] + ADP + H(+). This Pisum sativum (Garden pea) protein is Cell division control protein 2 homolog 2.